Consider the following 517-residue polypeptide: Bifunctional purine biosynthesis protein PurH (517 aa).

Positions 1–146 constitute an MGS-like domain; it reads MAPIALLSVS…KNHAHVAVLT (146 aa).

Belongs to the PurH family.

It catalyses the reaction (6R)-10-formyltetrahydrofolate + 5-amino-1-(5-phospho-beta-D-ribosyl)imidazole-4-carboxamide = 5-formamido-1-(5-phospho-D-ribosyl)imidazole-4-carboxamide + (6S)-5,6,7,8-tetrahydrofolate. The catalysed reaction is IMP + H2O = 5-formamido-1-(5-phospho-D-ribosyl)imidazole-4-carboxamide. It functions in the pathway purine metabolism; IMP biosynthesis via de novo pathway; 5-formamido-1-(5-phospho-D-ribosyl)imidazole-4-carboxamide from 5-amino-1-(5-phospho-D-ribosyl)imidazole-4-carboxamide (10-formyl THF route): step 1/1. Its pathway is purine metabolism; IMP biosynthesis via de novo pathway; IMP from 5-formamido-1-(5-phospho-D-ribosyl)imidazole-4-carboxamide: step 1/1. This Prochlorococcus marinus (strain MIT 9303) protein is Bifunctional purine biosynthesis protein PurH.